Reading from the N-terminus, the 355-residue chain is Putative transport protein PH1000 (355 aa).

Transmembrane regions (helical) follow at residues 34–54 (VTWI…LPFF), 55–75 (SPLF…IKLK), 84–104 (AILL…ILVY), 158–178 (FSVP…YFFL), 212–232 (VWLL…LIFK), 240–260 (ILAG…GWMI), 274–294 (IIAG…LPDF), and 310–330 (VLVL…GLII).

It belongs to the autoinducer-2 exporter (AI-2E) (TC 2.A.86) family.

Its subcellular location is the cell membrane. The polypeptide is Putative transport protein PH1000 (Pyrococcus horikoshii (strain ATCC 700860 / DSM 12428 / JCM 9974 / NBRC 100139 / OT-3)).